Consider the following 159-residue polypeptide: Large ribosomal subunit protein uL15 (159 aa).

Residues 1 to 18 (MKLNEIKDNEGSSKDRIR) are compositionally biased toward basic and acidic residues. A disordered region spans residues 1-39 (MKLNEIKDNEGSSKDRIRVGRGIGSGKGKTGGRGVKGQK). The span at 21–35 (RGIGSGKGKTGGRGV) shows a compositional bias: gly residues.

The protein belongs to the universal ribosomal protein uL15 family. As to quaternary structure, part of the 50S ribosomal subunit.

Its function is as follows. Binds to the 23S rRNA. This Allorhizobium ampelinum (strain ATCC BAA-846 / DSM 112012 / S4) (Agrobacterium vitis (strain S4)) protein is Large ribosomal subunit protein uL15.